The chain runs to 398 residues: Ubiquitin carboxyl-terminal hydrolase 17-like protein 6 (398 aa).

A USP domain is found at alanine 80–lysine 375. Cysteine 89 (nucleophile) is an active-site residue. The active-site Proton acceptor is histidine 334.

The protein belongs to the peptidase C19 family. USP17 subfamily.

The protein localises to the nucleus. The protein resides in the cytoplasm. It catalyses the reaction Thiol-dependent hydrolysis of ester, thioester, amide, peptide and isopeptide bonds formed by the C-terminal Gly of ubiquitin (a 76-residue protein attached to proteins as an intracellular targeting signal).. Functionally, deubiquitinating enzyme that removes conjugated ubiquitin from specific proteins to regulate different cellular processes that may include cell proliferation, progression through the cell cycle, cell migration, and the cellular response to viral infection. Seems to be non-functional in the regulation of apoptosis. The chain is Ubiquitin carboxyl-terminal hydrolase 17-like protein 6 (USP17L6P) from Homo sapiens (Human).